Here is a 352-residue protein sequence, read N- to C-terminus: UDP-N-acetylglucosamine--N-acetylmuramyl-(pentapeptide) pyrophosphoryl-undecaprenol N-acetylglucosamine transferase 2 (352 aa).

Residues 11–13, R164, S194, and Q289 each bind UDP-N-acetyl-alpha-D-glucosamine; that span reads SAG.

This sequence belongs to the glycosyltransferase 28 family. MurG subfamily.

Its subcellular location is the cell membrane. The enzyme catalyses di-trans,octa-cis-undecaprenyl diphospho-N-acetyl-alpha-D-muramoyl-L-alanyl-D-glutamyl-meso-2,6-diaminopimeloyl-D-alanyl-D-alanine + UDP-N-acetyl-alpha-D-glucosamine = di-trans,octa-cis-undecaprenyl diphospho-[N-acetyl-alpha-D-glucosaminyl-(1-&gt;4)]-N-acetyl-alpha-D-muramoyl-L-alanyl-D-glutamyl-meso-2,6-diaminopimeloyl-D-alanyl-D-alanine + UDP + H(+). Its pathway is cell wall biogenesis; peptidoglycan biosynthesis. Cell wall formation. Catalyzes the transfer of a GlcNAc subunit on undecaprenyl-pyrophosphoryl-MurNAc-pentapeptide (lipid intermediate I) to form undecaprenyl-pyrophosphoryl-MurNAc-(pentapeptide)GlcNAc (lipid intermediate II). The chain is UDP-N-acetylglucosamine--N-acetylmuramyl-(pentapeptide) pyrophosphoryl-undecaprenol N-acetylglucosamine transferase 2 from Bacillus cereus (strain ATCC 10987 / NRS 248).